A 163-amino-acid polypeptide reads, in one-letter code: Acetolactate synthase isozyme 3 small subunit (163 aa).

Residues 4 to 78 (ILSVLLENES…DVLRVSELGQ (75 aa)) form the ACT domain.

The protein belongs to the acetolactate synthase small subunit family. Dimer of large and small chains.

The enzyme catalyses 2 pyruvate + H(+) = (2S)-2-acetolactate + CO2. Its pathway is amino-acid biosynthesis; L-isoleucine biosynthesis; L-isoleucine from 2-oxobutanoate: step 1/4. It participates in amino-acid biosynthesis; L-valine biosynthesis; L-valine from pyruvate: step 1/4. With respect to regulation, sensitive to valine inhibition. The chain is Acetolactate synthase isozyme 3 small subunit (ilvH) from Escherichia coli (strain K12).